We begin with the raw amino-acid sequence, 179 residues long: Replication restart protein DnaT (179 aa).

A disordered region spans residues 151-179 (SRASNGGQPKRDVNSVSEPDSHIPRGFRG). Residues 159–173 (PKRDVNSVSEPDSHI) show a composition bias toward basic and acidic residues.

The protein belongs to the DnaT family. Homooligomerizes. Interacts with PriB. Component of the replication restart primosome. Primosome assembly occurs via a 'hand-off' mechanism. PriA binds to replication forks, subsequently PriB then DnaT bind; DnaT then displaces ssDNA to generate the helicase loading substrate.

Its function is as follows. Involved in the restart of stalled replication forks, which reloads the replicative helicase on sites other than the origin of replication. Can function in multiple replication restart pathways. Displaces ssDNA from a PriB-ssDNA complex. Probably forms a spiral filament on ssDNA. The protein is Replication restart protein DnaT of Klebsiella pneumoniae (strain 342).